Reading from the N-terminus, the 201-residue chain is Recombination protein RecR (201 aa).

The C4-type zinc-finger motif lies at 60 to 75 (CKYCQSLTEKDVCDIC). The Toprim domain maps to 83–177 (SKLCIIESML…KISRIGFGVP (95 aa)).

Belongs to the RecR family.

In terms of biological role, may play a role in DNA repair. It seems to be involved in an RecBC-independent recombinational process of DNA repair. It may act with RecF and RecO. The sequence is that of Recombination protein RecR from Francisella philomiragia subsp. philomiragia (strain ATCC 25017 / CCUG 19701 / FSC 153 / O#319-036).